A 459-amino-acid chain; its full sequence is DNA damage-inducible protein F (459 aa).

12 helical membrane-spanning segments follow: residues 2–22 (PPGVAVCFSSLFIRLVCMAFL), 29–49 (LWHLALPMIFSNITVPLLGLV), 63–83 (LGGVAVGATATSFLFMLLLFL), 111–131 (LLLALGAGALIALLRTPIIDL), 154–174 (WLSAPASLANLVLLGWLLGVQ), 180–200 (VILLVVGNILNIVLDVWLVMG), 207–227 (GAALATVIAEYATLLIGLLMV), 265–285 (LLQLCFGAITVLGARLGSDII), 289–309 (AVLMTLLTFTAYALDGFAYAV), 338–358 (IVALLFSVVYLLAGEHIIALL), 373–393 (IWQVILPVVGVWCYLLDGMFI), and 416–436 (LLTLPWLGNHALWLALTVFLA).

This sequence belongs to the multi antimicrobial extrusion (MATE) (TC 2.A.66.1) family.

The protein resides in the cell inner membrane. The protein is DNA damage-inducible protein F (dinF) of Escherichia coli (strain K12).